We begin with the raw amino-acid sequence, 546 residues long: Mitochondrial distribution and morphology protein 34 (546 aa).

The SMP-LTD domain maps to 1–195 (MAFNFNWSPL…LPAIIHRLSL (195 aa)). Disordered regions lie at residues 208-230 (EVKADEEAGPGQDPLLSPPQDPV), 299-319 (SHGGLISPASPPLSRTHSHVA), 344-382 (TMGAGRHPRTRPSRKHKRRVVDLRKPQKLDDTSSTCTDS), 395-416 (SSSARVGEKPDDPITPPVSPDA), and 517-546 (RRIQEGKGPGSVGSNYCGRRDPSPPPAYGQ). The span at 349 to 362 (RHPRTRPSRKHKRR) shows a compositional bias: basic residues. Over residues 363-374 (VVDLRKPQKLDD) the composition is skewed to basic and acidic residues.

The protein belongs to the MDM34 family. As to quaternary structure, component of the ER-mitochondria encounter structure (ERMES) or MDM complex, composed of MMM1, MDM10, MDM12 and MDM34.

It localises to the mitochondrion outer membrane. Component of the ERMES/MDM complex, which serves as a molecular tether to connect the endoplasmic reticulum (ER) and mitochondria. Components of this complex are involved in the control of mitochondrial shape and protein biogenesis, and function in nonvesicular lipid trafficking between the ER and mitochondria. MDM34 is required for the interaction of the ER-resident membrane protein MMM1 and the outer mitochondrial membrane-resident beta-barrel protein MDM10. The chain is Mitochondrial distribution and morphology protein 34 from Arthroderma otae (strain ATCC MYA-4605 / CBS 113480) (Microsporum canis).